The following is a 437-amino-acid chain: Enolase (437 aa).

(2R)-2-phosphoglycerate is bound at residue glutamine 162. The active-site Proton donor is the glutamate 204. Mg(2+) contacts are provided by aspartate 251, glutamate 297, and aspartate 324. 4 residues coordinate (2R)-2-phosphoglycerate: lysine 349, arginine 378, serine 379, and lysine 400. Lysine 349 acts as the Proton acceptor in catalysis.

It belongs to the enolase family. It depends on Mg(2+) as a cofactor.

The protein localises to the cytoplasm. Its subcellular location is the secreted. It localises to the cell surface. The enzyme catalyses (2R)-2-phosphoglycerate = phosphoenolpyruvate + H2O. It functions in the pathway carbohydrate degradation; glycolysis; pyruvate from D-glyceraldehyde 3-phosphate: step 4/5. Functionally, catalyzes the reversible conversion of 2-phosphoglycerate (2-PG) into phosphoenolpyruvate (PEP). It is essential for the degradation of carbohydrates via glycolysis. The sequence is that of Enolase from Chlorobium phaeobacteroides (strain DSM 266 / SMG 266 / 2430).